The following is a 514-amino-acid chain: Probable type III restriction-modification enzyme HindVIP Res subunit (514 aa).

The protein belongs to the type III restriction-modification system Res protein family. Contains two different subunits: Res and Mod. Mg(2+) is required as a cofactor. It depends on S-adenosyl-L-methionine as a cofactor.

It catalyses the reaction Endonucleolytic cleavage of DNA to give specific double-stranded fragments with terminal 5'-phosphates.. Its function is as follows. A type III restriction enzyme that recognizes 2 inversely oriented double-stranded sequences 5'-CGAAT-3' and cleaves 25-27 base pairs downstream. After binding to one recognition site undergoes random one-dimensional diffusion along DNA until it collides with a stationary enzyme bound to the second DNA site, which is when DNA cleavage occurs. DNA restriction requires both the Res and Mod subunits. The chain is Probable type III restriction-modification enzyme HindVIP Res subunit from Haemophilus influenzae (strain ATCC 51907 / DSM 11121 / KW20 / Rd).